The chain runs to 341 residues: Holliday junction branch migration complex subunit RuvB (341 aa).

The segment at 1–21 is disordered; the sequence is MSQPDPMLRPEPLESDGEDRA. A large ATPase domain (RuvB-L) region spans residues 4-183; sequence PDPMLRPEPL…FGIPTRLQFY (180 aa). Residues Leu-22, Arg-23, Gly-64, Lys-67, Thr-68, Thr-69, 130–132, Arg-173, Tyr-183, and Arg-220 each bind ATP; that span reads EDF. Thr-68 is a Mg(2+) binding site. Positions 184-254 are small ATPAse domain (RuvB-S); the sequence is TIEELDLIVT…IADSALTRLG (71 aa). Residues 257-341 are head domain (RuvB-H); it reads HLGLDTADRR…PRTQESLFDE (85 aa). Arg-293, Arg-312, and Arg-317 together coordinate DNA.

Belongs to the RuvB family. As to quaternary structure, homohexamer. Forms an RuvA(8)-RuvB(12)-Holliday junction (HJ) complex. HJ DNA is sandwiched between 2 RuvA tetramers; dsDNA enters through RuvA and exits via RuvB. An RuvB hexamer assembles on each DNA strand where it exits the tetramer. Each RuvB hexamer is contacted by two RuvA subunits (via domain III) on 2 adjacent RuvB subunits; this complex drives branch migration. In the full resolvosome a probable DNA-RuvA(4)-RuvB(12)-RuvC(2) complex forms which resolves the HJ.

Its subcellular location is the cytoplasm. The enzyme catalyses ATP + H2O = ADP + phosphate + H(+). Its function is as follows. The RuvA-RuvB-RuvC complex processes Holliday junction (HJ) DNA during genetic recombination and DNA repair, while the RuvA-RuvB complex plays an important role in the rescue of blocked DNA replication forks via replication fork reversal (RFR). RuvA specifically binds to HJ cruciform DNA, conferring on it an open structure. The RuvB hexamer acts as an ATP-dependent pump, pulling dsDNA into and through the RuvAB complex. RuvB forms 2 homohexamers on either side of HJ DNA bound by 1 or 2 RuvA tetramers; 4 subunits per hexamer contact DNA at a time. Coordinated motions by a converter formed by DNA-disengaged RuvB subunits stimulates ATP hydrolysis and nucleotide exchange. Immobilization of the converter enables RuvB to convert the ATP-contained energy into a lever motion, pulling 2 nucleotides of DNA out of the RuvA tetramer per ATP hydrolyzed, thus driving DNA branch migration. The RuvB motors rotate together with the DNA substrate, which together with the progressing nucleotide cycle form the mechanistic basis for DNA recombination by continuous HJ branch migration. Branch migration allows RuvC to scan DNA until it finds its consensus sequence, where it cleaves and resolves cruciform DNA. This chain is Holliday junction branch migration complex subunit RuvB, found in Paracoccus denitrificans (strain Pd 1222).